We begin with the raw amino-acid sequence, 77 residues long: Large ribosomal subunit protein uL29 (77 aa).

Belongs to the universal ribosomal protein uL29 family.

The sequence is that of Large ribosomal subunit protein uL29 (rpmC) from Mycobacterium bovis (strain ATCC BAA-935 / AF2122/97).